Here is a 403-residue protein sequence, read N- to C-terminus: Enoyl-[acyl-carrier-protein] reductase [NADH] (403 aa).

Residues G49–Y54, F75–E76, D112–A113, and L141–A142 each bind NAD(+). Substrate is bound at residue Y227. The active-site Proton donor is Y237. NAD(+)-binding positions include K246 and V276–T278.

The protein belongs to the TER reductase family. Monomer.

It carries out the reaction a 2,3-saturated acyl-[ACP] + NAD(+) = a (2E)-enoyl-[ACP] + NADH + H(+). The protein operates within lipid metabolism; fatty acid biosynthesis. Its function is as follows. Involved in the final reduction of the elongation cycle of fatty acid synthesis (FAS II). Catalyzes the reduction of a carbon-carbon double bond in an enoyl moiety that is covalently linked to an acyl carrier protein (ACP). This chain is Enoyl-[acyl-carrier-protein] reductase [NADH], found in Pseudomonas putida (strain ATCC 47054 / DSM 6125 / CFBP 8728 / NCIMB 11950 / KT2440).